We begin with the raw amino-acid sequence, 549 residues long: Cytoplasmic trehalase (549 aa).

Substrate is bound by residues Arg-168, 175 to 176, Asn-212, 221 to 223, 292 to 294, and Gly-324; these read WD, RSQ, and RDE. Residues Asp-326 and Glu-509 each act as proton donor/acceptor in the active site. A substrate-binding site is contributed by Glu-525.

Belongs to the glycosyl hydrolase 37 family. Monomer.

It localises to the cytoplasm. The enzyme catalyses alpha,alpha-trehalose + H2O = alpha-D-glucose + beta-D-glucose. Its pathway is glycan degradation; trehalose degradation; D-glucose from alpha,alpha-trehalose: step 1/1. In terms of biological role, hydrolyzes trehalose to glucose. Could be involved, in cells returning to low osmolarity conditions, in the utilization of the accumulated cytoplasmic trehalose, which was synthesized in response to high osmolarity. The sequence is that of Cytoplasmic trehalase from Escherichia coli O127:H6 (strain E2348/69 / EPEC).